The following is a 533-amino-acid chain: MEHRSKMEFFQKLGYSQEDVVRVLGKLGDSALVNDVLQELIQTGSRPRAQEDPASGTGVVLIPRGCCGVQDSAQQGPGTRPRRGWRRSSPLLRPIVIDGSNVAMSHGNKEAFSCRGIRLAVDWFTDRGHTYIKVFVPSWRKEPSRSDTPIREQHVLEELERQAVLVYTPSRKVNGKRVVCYDDRYIVKVAYEKDGIIVSNDNYRDLQNENPEWKWFIEQRLLMFSFVNDRFMPPDDPLGRRGPTLSNFLSKKPRPPEPSWQHCPYGKKCTYGVKCRFYHPERPHHGQLSVADELRAKTRAWLGGGAEEPRTPSARSRPTTARLLPQEPGEHDLPPAPQPAVLAALNRSFARLTFSDTAASGVVSQSRGPDWMPTGVPTSWAPPSLRAGSAATIGLPGMRSLRTPNNPLSPGDLGSPICPQARLSERHRSRDMHSDLPPQRRPLEDPWALLPSSYCYLNHSVWSESAWGEDIFRGPSESAQPVANGGGTRPVHCSFFPPDQDHPVMASGPPLSDMALLTLLQRSQKTGAPLGDP.

The region spanning 92–246 (LRPIVIDGSN…PLGRRGPTLS (155 aa)) is the RNase NYN domain. Residues 251–282 (KKPRPPEPSWQHCPYGKKCTYGVKCRFYHPER) form a C3H1-type zinc finger. Residues 262-368 (HCPYGKKCTY…ASGVVSQSRG (107 aa)) form a necessary for interaction with ZC3H12A region. Positions 302 to 335 (LGGGAEEPRTPSARSRPTTARLLPQEPGEHDLPP) are disordered.

The protein belongs to the ZC3H12 family. In terms of assembly, interacts with ZC3H12A. Mg(2+) is required as a cofactor. In terms of tissue distribution, expressed at low levels in bone marrow derived macrophages.

It localises to the cytoplasm. Its subcellular location is the P-body. Functionally, may regulate cell growth likely by suppressing RB1 phosphorylation. May function as RNase and regulate the levels of target RNA species (Potential). In association with ZC3H12A enhances the degradation of interleukin IL-6 mRNA level in activated macrophages. Serve as a tumor suppressor in certain leukemia cells. Overexpression inhibits the G1 to S phase progression through suppression of RB1 phosphorylation. The chain is Probable ribonuclease ZC3H12D from Mus musculus (Mouse).